The sequence spans 316 residues: Ribosomal RNA small subunit methyltransferase H (316 aa).

S-adenosyl-L-methionine-binding positions include 35 to 37 (GGH), Asp55, Phe79, Asp101, and Gln108. Residues 291–316 (ALKPSDQEVELNPRSRSSVLRVAEKL) are disordered.

The protein belongs to the methyltransferase superfamily. RsmH family.

The protein resides in the cytoplasm. The catalysed reaction is cytidine(1402) in 16S rRNA + S-adenosyl-L-methionine = N(4)-methylcytidine(1402) in 16S rRNA + S-adenosyl-L-homocysteine + H(+). In terms of biological role, specifically methylates the N4 position of cytidine in position 1402 (C1402) of 16S rRNA. The sequence is that of Ribosomal RNA small subunit methyltransferase H from Vibrio cholerae serotype O1 (strain ATCC 39315 / El Tor Inaba N16961).